Reading from the N-terminus, the 450-residue chain is Probable transporter MCH1 (450 aa).

The next 12 helical transmembrane spans lie at 32–52 (AFLV…ISLY), 69–89 (VLFS…GLLS), 96–116 (MLSW…AWVF), 127–147 (VLCF…ALFT), 157–177 (LCSI…GSQL), 199–219 (LAVA…IVTM), 255–275 (PAAY…EMFL), 290–309 (VLPE…GLII), 320–340 (MSVQ…VVLA), 355–375 (LSGA…LAVW), 378–398 (AVFG…SILF), and 423–443 (VFWS…LMYL).

Belongs to the major facilitator superfamily.

The protein localises to the vacuole membrane. Its function is as follows. Probable transporter. This chain is Probable transporter MCH1 (MCH1), found in Eremothecium gossypii (strain ATCC 10895 / CBS 109.51 / FGSC 9923 / NRRL Y-1056) (Yeast).